A 36-amino-acid polypeptide reads, in one-letter code: Collagen alpha-2(I) chain (36 aa).

Positions 1–36 (GSNGEPGSAGPPGPAGLRGLPGESGAVGPAGPPGSR) are disordered. 4-hydroxyproline is present on residues Pro-6 and Pro-12. The segment covering 15–29 (AGLRGLPGESGAVGP) has biased composition (low complexity). At Pro-33 the chain carries 4-hydroxyproline.

It belongs to the fibrillar collagen family. In terms of assembly, trimers of one alpha 2(I) and two alpha 1(I) chains. Proline residues at the third position of the tripeptide repeating unit (G-X-Y) are hydroxylated in some or all of the chains.

Its subcellular location is the secreted. It localises to the extracellular space. The protein localises to the extracellular matrix. Its function is as follows. Type I collagen is a member of group I collagen (fibrillar forming collagen). The protein is Collagen alpha-2(I) chain of Brachylophosaurus canadensis (Campanian hadrosaur).